A 280-amino-acid chain; its full sequence is Putative pyruvate, phosphate dikinase regulatory protein (280 aa).

152–159 (GISRTSKT) provides a ligand contact to ADP.

It belongs to the pyruvate, phosphate/water dikinase regulatory protein family. PDRP subfamily.

The catalysed reaction is N(tele)-phospho-L-histidyl/L-threonyl-[pyruvate, phosphate dikinase] + ADP = N(tele)-phospho-L-histidyl/O-phospho-L-threonyl-[pyruvate, phosphate dikinase] + AMP + H(+). It catalyses the reaction N(tele)-phospho-L-histidyl/O-phospho-L-threonyl-[pyruvate, phosphate dikinase] + phosphate + H(+) = N(tele)-phospho-L-histidyl/L-threonyl-[pyruvate, phosphate dikinase] + diphosphate. Its function is as follows. Bifunctional serine/threonine kinase and phosphorylase involved in the regulation of the pyruvate, phosphate dikinase (PPDK) by catalyzing its phosphorylation/dephosphorylation. This is Putative pyruvate, phosphate dikinase regulatory protein from Clostridioides difficile (strain 630) (Peptoclostridium difficile).